Here is a 392-residue protein sequence, read N- to C-terminus: Probable myosin light chain kinase DDB_G0271550 (392 aa).

A Protein kinase domain is found at 20-278 (YEFGPEIGRG…ASQCIKHPWL (259 aa)). Residues 26 to 34 (IGRGAFSIV) and Lys-49 contribute to the ATP site. Asp-142 acts as the Proton acceptor in catalysis. Residues 317–326 (SQSTPNLHSA) are compositionally biased toward polar residues. Positions 317–392 (SQSTPNLHSA…NNNNNNNNNI (76 aa)) are disordered. The span at 327 to 392 (NSNTNTNSLS…NNNNNNNNNI (66 aa)) shows a compositional bias: low complexity.

Belongs to the protein kinase superfamily. CAMK Ser/Thr protein kinase family. CaMK subfamily.

It carries out the reaction L-seryl-[myosin light chain] + ATP = O-phospho-L-seryl-[myosin light chain] + ADP + H(+). It catalyses the reaction L-threonyl-[myosin light chain] + ATP = O-phospho-L-threonyl-[myosin light chain] + ADP + H(+). In terms of biological role, may phosphorylate a specific serine in the N-terminus of a myosin light chain. This is Probable myosin light chain kinase DDB_G0271550 from Dictyostelium discoideum (Social amoeba).